Here is an 886-residue protein sequence, read N- to C-terminus: UPF0592 membrane protein C7D4.03c (886 aa).

Positions 87 to 112 (ILNEPYNESPSSSSSDSSSRSTSPFS) are disordered. Low complexity predominate over residues 95 to 112 (SPSSSSSDSSSRSTSPFS). 3 helical membrane-spanning segments follow: residues 277–297 (FCAS…DHFL), 374–394 (GGFF…QFSF), and 400–420 (VIYF…LTIS).

This sequence belongs to the UPF0592 family.

The protein resides in the membrane. This chain is UPF0592 membrane protein C7D4.03c, found in Schizosaccharomyces pombe (strain 972 / ATCC 24843) (Fission yeast).